We begin with the raw amino-acid sequence, 248 residues long: 3-deoxy-manno-octulosonate cytidylyltransferase (248 aa).

It belongs to the KdsB family. Requires Mg(2+) as cofactor.

Its subcellular location is the cytoplasm. The catalysed reaction is 3-deoxy-alpha-D-manno-oct-2-ulosonate + CTP = CMP-3-deoxy-beta-D-manno-octulosonate + diphosphate. It participates in nucleotide-sugar biosynthesis; CMP-3-deoxy-D-manno-octulosonate biosynthesis; CMP-3-deoxy-D-manno-octulosonate from 3-deoxy-D-manno-octulosonate and CTP: step 1/1. It functions in the pathway bacterial outer membrane biogenesis; lipopolysaccharide biosynthesis. In terms of biological role, activates KDO (a required 8-carbon sugar) for incorporation into bacterial lipopolysaccharide in Gram-negative bacteria. This is 3-deoxy-manno-octulosonate cytidylyltransferase from Escherichia coli O157:H7.